We begin with the raw amino-acid sequence, 149 residues long: Limonene-1,2-epoxide hydrolase (149 aa).

The Proton donor role is filled by D101. D132 acts as the Proton acceptor in catalysis.

It belongs to the limonene-1,2-epoxide hydrolase family. As to quaternary structure, monomer.

The catalysed reaction is limonene 1,2-epoxide + H2O = limonene-1,2-diol. The protein operates within terpene metabolism; (4R)-limonene degradation; (1S,4R)-1-hydroxylimonen-2-one from (4R)-limonene: step 2/3. Catalyzes the conversion of limonene-1,2-epoxide to limonene-1,2-diol. Can use both the (-) and (+) isomers of limonene-1,2-epoxide as substrates and also has some activity with 1-methylcyclohexene oxide, cyclohexene oxide and indene oxide as substrates. This chain is Limonene-1,2-epoxide hydrolase (limA), found in Rhodococcus erythropolis (Arthrobacter picolinophilus).